The chain runs to 116 residues: FK506-binding protein 1 (116 aa).

One can recognise a PPIase FKBP-type domain in the interval 19–116 (GDKVSIHYTG…IFEVELLKIN (98 aa)).

It belongs to the FKBP-type PPIase family. FKBP1 subfamily.

Its subcellular location is the cytoplasm. The enzyme catalyses [protein]-peptidylproline (omega=180) = [protein]-peptidylproline (omega=0). Its activity is regulated as follows. Inhibited by both FK506 and rapamycin. PPIases accelerate the folding of proteins. It catalyzes the cis-trans isomerization of proline imidic peptide bonds in oligopeptides. The polypeptide is FK506-binding protein 1 (fpr1) (Aspergillus oryzae (strain ATCC 42149 / RIB 40) (Yellow koji mold)).